We begin with the raw amino-acid sequence, 294 residues long: UDP-3-O-acyl-N-acetylglucosamine deacetylase (294 aa).

Residues His75, His232, and Asp236 each contribute to the Zn(2+) site. The active-site Proton donor is the His259.

This sequence belongs to the LpxC family. Zn(2+) is required as a cofactor.

It catalyses the reaction a UDP-3-O-[(3R)-3-hydroxyacyl]-N-acetyl-alpha-D-glucosamine + H2O = a UDP-3-O-[(3R)-3-hydroxyacyl]-alpha-D-glucosamine + acetate. Its pathway is glycolipid biosynthesis; lipid IV(A) biosynthesis; lipid IV(A) from (3R)-3-hydroxytetradecanoyl-[acyl-carrier-protein] and UDP-N-acetyl-alpha-D-glucosamine: step 2/6. Its function is as follows. Catalyzes the hydrolysis of UDP-3-O-myristoyl-N-acetylglucosamine to form UDP-3-O-myristoylglucosamine and acetate, the committed step in lipid A biosynthesis. This chain is UDP-3-O-acyl-N-acetylglucosamine deacetylase, found in Campylobacter concisus (strain 13826).